The chain runs to 98 residues: Protein PROLINE CONTENT ALTERNATIVE 22 (98 aa).

Mainly expressed in flowers, to a lower extent, in roots and, at very low levels, in leaves and stems.

It localises to the cytoplasm. Acts as an opponent to RZF1 during early seedling growth in term of proline accumulation in response to dehydration and abscisic acid (ABA). Confers sensitivity to abiotic stresses such as ABA, drought and osmotic stress (e.g. mannitol treatment) by preventing proline accumulation and by reducing the expression of dehydration-inducible genes. Promotes the production of lipid peroxidation by drought stress thus leading to malondialdehyde (MDA) synthesis. Prevents pollen tube elongation. Necessary for RZF1 expression in seedlings. In Arabidopsis thaliana (Mouse-ear cress), this protein is Protein PROLINE CONTENT ALTERNATIVE 22.